Consider the following 242-residue polypeptide: HTH-type transcriptional regulator GadW (242 aa).

Residues 139-236 form the HTH araC/xylS-type domain; the sequence is GKVERLISFD…GVTPHQFAQH (98 aa). DNA-binding regions (H-T-H motif) lie at residues 156–177 and 203–226; these read RDIAERMYTSESLIKKKLQDEN and LHTIAEKCGYSSTSYFINTFRQYY.

Homodimer.

Depending on the conditions (growth phase and medium), acts as a positive or negative regulator of gadA and gadBC. Repression occurs directly or via the repression of the expression of gadX. Activation occurs directly by the binding of GadW to the gadA and gadBC promoters. The chain is HTH-type transcriptional regulator GadW (gadW) from Escherichia coli (strain K12).